A 1653-amino-acid chain; its full sequence is Ciliary rootlet coiled-coil protein 2 (1653 aa).

Polar residues predominate over residues 1-17; the sequence is MSSASSEPGNGDASQQP. The interval 1 to 57 is disordered; that stretch reads MSSASSEPGNGDASQQPLLGLDTVIQRLEDTILSPTASREDRALTVRGEGRQASPTP. Residues 38 to 50 show a composition bias toward basic and acidic residues; it reads SREDRALTVRGEG. Coiled coils occupy residues 86–145 and 310–351; these read VARV…SELE and KVAL…LVAQ. A disordered region spans residues 367 to 396; it reads LGEPRRPLRSPQRATSPHQGASPPHICSPA. Residues 423–1215 are a coiled coil; it reads LKSSQALVAS…QRKLAEVEAA (793 aa). The tract at residues 1302–1356 is disordered; sequence GLQRQSPWASPEQPGSPTKGSDSSQALPGQQGTSPPARPHSPLRWPSPTPGGRSS. Polar residues predominate over residues 1304–1335; that stretch reads QRQSPWASPEQPGSPTKGSDSSQALPGQQGTS. Positions 1361-1570 form a coiled coil; it reads VATVQDILRD…QAQMTEMEQA (210 aa).

It belongs to the rootletin family.

This is Ciliary rootlet coiled-coil protein 2 from Homo sapiens (Human).